Here is a 1487-residue protein sequence, read N- to C-terminus: Secretory phospholipase A2 receptor (1487 aa).

A signal peptide spans 1 to 26 (MVQWLAMLQLLWLQQLLLLGIHQGIA). At 27–1396 (QDLTHIQEPS…AQPEKGLSHS (1370 aa)) the chain is on the extracellular side. A Ricin B-type lectin domain is found at 42–165 (KGIFIIQSES…SSGGDICEHP (124 aa)). Cystine bridges form between Cys55/Cys68, Cys93/Cys110, Cys181/Cys207, and Cys195/Cys222. The N-linked (GlcNAc...) asparagine glycan is linked to Asn97. One can recognise a Fibronectin type-II domain in the interval 176-224 (AHGMPCVFPFQFKGHWHHDCIREGQKEHLLWCATTSRYEEDEKWGFCPD). An N-linked (GlcNAc...) asparagine glycan is attached at Asn239. 6 consecutive C-type lectin domains span residues 241–357 (SSRI…YICK), 387–504 (FNRK…YICK), 524–643 (HGRF…MSLC), 673–797 (GLAS…WICR), 819–938 (YQNA…SICK), and 964–1095 (FNYK…GFVC). 10 disulfide bridges follow: Cys263/Cys356, Cys333/Cys348, Cys408/Cys503, Cys480/Cys495, Cys617/Cys634, Cys699/Cys796, Cys774/Cys788, Cys840/Cys937, Cys914/Cys929, and Cys1066/Cys1086. A glycan (N-linked (GlcNAc...) asparagine) is linked at Asn928. Asn1107, Asn1122, and Asn1131 each carry an N-linked (GlcNAc...) asparagine glycan. C-type lectin domains follow at residues 1120–1231 (YGNR…GAIC) and 1256–1377 (FKGN…FICK). 3 cysteine pairs are disulfide-bonded: Cys1208–Cys1222, Cys1279–Cys1376, and Cys1353–Cys1368. Residues 1397-1417 (IVPVTVTLTLIIALGIFMLCF) traverse the membrane as a helical segment. The Cytoplasmic segment spans residues 1418–1487 (WIYKQKSDIF…HKGRPICISP (70 aa)). The Endocytosis signal motif lies at 1435-1441 (GSYYPTL). Residues 1463 to 1475 (DEEVRDAPATESK) are compositionally biased toward basic and acidic residues. The disordered stretch occupies residues 1463-1487 (DEEVRDAPATESKRGHKGRPICISP).

In terms of assembly, interacts with sPLA2-IB/PLA2G1B; this interaction mediates intracellular signaling as well as clearance of extracellular sPLA2-IB/PLA2G1B via endocytotic pathway. Interacts with sPLA2-X/PLA2G10; this interaction mediates sPLA2-X/PLA2G10 clearance and inactivation. The secretory phospholipase A2 receptor form may be produced by the action of metalloproteinases. It contains all extracellular domains and only lacks transmembrane and cytosolic regions. It is however unclear whether this form is produced by proteolytic cleavage as suggested by some experiments reported by PubMed:11830583, or by alternative splicing. In terms of tissue distribution, widely expressed. Present in type II alveolar epithelial cells and a subset of splenic lymphocytes. Present at the surface of polymorphonuclear neutrophils (at protein level).

It is found in the cell membrane. The protein resides in the secreted. In terms of biological role, receptor for secretory phospholipase A2 (sPLA2). Acts as a receptor for phospholipases sPLA2-IB/PLA2G1B, sPLA2-X/PLA2G10 and, with lower affinity, sPLA2-IIA/PLA2G2A. Also able to bind to snake PA2-like toxins. Although its precise function remains unclear, binding of sPLA2 to its receptor participates in both positive and negative regulation of sPLA2 functions as well as clearance of sPLA2. Binding of sPLA2-IB/PLA2G1B induces various effects depending on the cell type, such as activation of the mitogen-activated protein kinase (MAPK) cascade to induce cell proliferation, the production of lipid mediators, selective release of arachidonic acid in bone marrow-derived mast cells. In neutrophils, binding of sPLA2-IB/PLA2G1B can activate p38 MAPK to stimulate elastase release and cell adhesion. May be involved in responses in pro-inflammatory cytokine productions during endotoxic shock. Also has endocytic properties and rapidly internalizes sPLA2 ligands, which is particularly important for the clearance of extracellular sPLA2s to protect their potent enzymatic activities. The soluble secretory phospholipase A2 receptor form is circulating and acts as a negative regulator of sPLA2 functions by blocking the biological functions of sPLA2-IB/PLA2G1B and sPLA2-X/PLA2G10. In podocytes, binding of sPLA2-IB/PLA2G1B can regulate podocyte survival and glomerular homeostasis. The protein is Secretory phospholipase A2 receptor (Pla2r1) of Mus musculus (Mouse).